A 362-amino-acid polypeptide reads, in one-letter code: UDP-N-acetylglucosamine--N-acetylmuramyl-(pentapeptide) pyrophosphoryl-undecaprenol N-acetylglucosamine transferase (362 aa).

Residues Thr15–Gly17, Asn127, Arg165, Ser191, Ile247, Ala266–Glu271, and Gln292 each bind UDP-N-acetyl-alpha-D-glucosamine.

This sequence belongs to the glycosyltransferase 28 family. MurG subfamily.

It is found in the cell inner membrane. It catalyses the reaction di-trans,octa-cis-undecaprenyl diphospho-N-acetyl-alpha-D-muramoyl-L-alanyl-D-glutamyl-meso-2,6-diaminopimeloyl-D-alanyl-D-alanine + UDP-N-acetyl-alpha-D-glucosamine = di-trans,octa-cis-undecaprenyl diphospho-[N-acetyl-alpha-D-glucosaminyl-(1-&gt;4)]-N-acetyl-alpha-D-muramoyl-L-alanyl-D-glutamyl-meso-2,6-diaminopimeloyl-D-alanyl-D-alanine + UDP + H(+). The protein operates within cell wall biogenesis; peptidoglycan biosynthesis. Functionally, cell wall formation. Catalyzes the transfer of a GlcNAc subunit on undecaprenyl-pyrophosphoryl-MurNAc-pentapeptide (lipid intermediate I) to form undecaprenyl-pyrophosphoryl-MurNAc-(pentapeptide)GlcNAc (lipid intermediate II). This Shewanella baltica (strain OS223) protein is UDP-N-acetylglucosamine--N-acetylmuramyl-(pentapeptide) pyrophosphoryl-undecaprenol N-acetylglucosamine transferase.